The following is a 311-amino-acid chain: Aspartate carbamoyltransferase catalytic subunit (311 aa).

Carbamoyl phosphate contacts are provided by Arg-55 and Thr-56. L-aspartate is bound at residue Lys-85. Carbamoyl phosphate contacts are provided by Arg-106, His-135, and Gln-138. L-aspartate is bound by residues Arg-168 and Arg-230. 2 residues coordinate carbamoyl phosphate: Leu-268 and Pro-269.

Belongs to the aspartate/ornithine carbamoyltransferase superfamily. ATCase family. Heterododecamer (2C3:3R2) of six catalytic PyrB chains organized as two trimers (C3), and six regulatory PyrI chains organized as three dimers (R2).

The catalysed reaction is carbamoyl phosphate + L-aspartate = N-carbamoyl-L-aspartate + phosphate + H(+). It functions in the pathway pyrimidine metabolism; UMP biosynthesis via de novo pathway; (S)-dihydroorotate from bicarbonate: step 2/3. Catalyzes the condensation of carbamoyl phosphate and aspartate to form carbamoyl aspartate and inorganic phosphate, the committed step in the de novo pyrimidine nucleotide biosynthesis pathway. The chain is Aspartate carbamoyltransferase catalytic subunit from Cronobacter sakazakii (strain ATCC BAA-894) (Enterobacter sakazakii).